Consider the following 88-residue polypeptide: MANSPQAKKRARQNERRFAINKARRSRIRTHLRTVEEAIASGDQAAATAALKAAQPEMMRGVTKGVMHKNTAARKMSRLSSRVKALGA.

Disordered regions lie at residues 1 to 25 and 61 to 88; these read MANS…KARR and GVTK…ALGA.

The protein belongs to the bacterial ribosomal protein bS20 family.

In terms of biological role, binds directly to 16S ribosomal RNA. This chain is Small ribosomal subunit protein bS20, found in Jannaschia sp. (strain CCS1).